The sequence spans 271 residues: MSPPLEPHDYIGLSAAAASPTPSSSSCSSSPNPGGEARGPRLTLRLGLPGSESPEREVVAAGLTLGPLPPTTTKAASKRAFPDSSPRHGASSGSVAAAAACQDKAAPAAAPPAAKAQVVGWPPVRNYRKNTLAASASKGKGEDKGTAEGGPLYVKVSMDGAPYLRKVDLKMYSSYEDLSMALEKMFSCFITGQSGLRKSSNRDRLTNGSKADALQDQEYVLTYEDKDADWMLVGDLPWDLFTTICRKLKIMRGSDAAGIAPRSIEQSGQSR.

Residues 1 to 96 form a disordered region; the sequence is MSPPLEPHDY…RHGASSGSVA (96 aa). 2 stretches are compositionally biased toward low complexity: residues 14–33 and 40–50; these read SAAAASPTPSSSSCSSSPNP and PRLTLRLGLPG. The EAR-like (transcriptional repression) signature appears at 44 to 48; that stretch reads LRLGL. One can recognise a PB1 domain in the interval 151 to 255; sequence PLYVKVSMDG…RKLKIMRGSD (105 aa).

The protein belongs to the Aux/IAA family. As to quaternary structure, homodimers and heterodimers.

It localises to the nucleus. Functionally, aux/IAA proteins are short-lived transcriptional factors that function as repressors of early auxin response genes at low auxin concentrations. The sequence is that of Auxin-responsive protein IAA5 (IAA5) from Oryza sativa subsp. japonica (Rice).